Here is a 287-residue protein sequence, read N- to C-terminus: MPSISVHAYAKINLGLFITGKRDDGYHNLETIFAPVSWHDTLCFSPADAISMRCTNADLPTDGSNLCIRAARSLQEYAGVGDGVSIELDKQVPFGAGLGGGSSDAATVLRVLNGFWNINATVEDLHPLAVKLGADVPYFLEMEGLAYAGGIGDELTDLHAGLPWHVVTVFPAEHISTAWAYGNFHRRFGQSRPDIRTIAADLSGIGDTGRLELFENDFQSAVFEQFPKVRRVHTDLLEAGAVFASLSGSGSAVYGLFETAMDARRAIERQRASYPTNLTPPGFSMRQ.

K11 is an active-site residue. 93-103 (PFGAGLGGGSS) contributes to the ATP binding site. D135 is an active-site residue.

Belongs to the GHMP kinase family. IspE subfamily.

The enzyme catalyses 4-CDP-2-C-methyl-D-erythritol + ATP = 4-CDP-2-C-methyl-D-erythritol 2-phosphate + ADP + H(+). Its pathway is isoprenoid biosynthesis; isopentenyl diphosphate biosynthesis via DXP pathway; isopentenyl diphosphate from 1-deoxy-D-xylulose 5-phosphate: step 3/6. Its function is as follows. Catalyzes the phosphorylation of the position 2 hydroxy group of 4-diphosphocytidyl-2C-methyl-D-erythritol. This chain is 4-diphosphocytidyl-2-C-methyl-D-erythritol kinase, found in Chlorobium luteolum (strain DSM 273 / BCRC 81028 / 2530) (Pelodictyon luteolum).